The sequence spans 205 residues: Probable thymidylate kinase (205 aa).

Position 10 to 17 (10 to 17 (GIDGSGKT)) interacts with ATP.

The protein belongs to the thymidylate kinase family.

It carries out the reaction dTMP + ATP = dTDP + ADP. The chain is Probable thymidylate kinase (tmk) from Pyrococcus horikoshii (strain ATCC 700860 / DSM 12428 / JCM 9974 / NBRC 100139 / OT-3).